A 321-amino-acid chain; its full sequence is MGEWTILERLLEAAVQQHSTMIGRILLTVVVIFRILIVAIVGETVYDDEQTMFVCNTLQPGCNQACYDRAFPISHIRYWVFQIIMVCTPSLCFITYSVHQSAKQRERRYSTVFLALDRDPPESIGGPGGTGGGGSGGGKREDKKLQNAIVNGVLQNTENTSKETEPDCLEVKELTPHPSGLRTASKSKLRRQEGISRFYIIQVVFRNALEIGFLVGQYFLYGFSVPGLYECNRYPCIKEVECYVSRPTEKTVFLVFMFAVSGICVVLNLAELNHLGWRKIKLAVRGAQAKRKSIYEIRNKDLPRVSVPNFGRTQSSDSAYV.

The Cytoplasmic portion of the chain corresponds to 1–19 (MGEWTILERLLEAAVQQHS). A helical transmembrane segment spans residues 20-42 (TMIGRILLTVVVIFRILIVAIVG). The Extracellular portion of the chain corresponds to 43-75 (ETVYDDEQTMFVCNTLQPGCNQACYDRAFPISH). A helical membrane pass occupies residues 76 to 98 (IRYWVFQIIMVCTPSLCFITYSV). Residues 99-197 (HQSAKQRERR…KLRRQEGISR (99 aa)) are Cytoplasmic-facing. Positions 118-141 (RDPPESIGGPGGTGGGGSGGGKRE) are disordered. Residues 125-137 (GGPGGTGGGGSGG) are compositionally biased toward gly residues. The chain crosses the membrane as a helical span at residues 198-220 (FYIIQVVFRNALEIGFLVGQYFL). The Extracellular portion of the chain corresponds to 221–252 (YGFSVPGLYECNRYPCIKEVECYVSRPTEKTV). Residues 253–275 (FLVFMFAVSGICVVLNLAELNHL) form a helical membrane-spanning segment. Over 276–321 (GWRKIKLAVRGAQAKRKSIYEIRNKDLPRVSVPNFGRTQSSDSAYV) the chain is Cytoplasmic.

Belongs to the connexin family. Delta-type subfamily. As to quaternary structure, a connexon is composed of a hexamer of connexins. As to expression, highly expressed in neurons.

It is found in the cell membrane. The protein localises to the cell junction. Its subcellular location is the gap junction. Functionally, one gap junction consists of a cluster of closely packed pairs of transmembrane channels, the connexons, through which materials of low MW diffuse from one cell to a neighboring cell. The protein is Gap junction delta-2 protein (GJD2) of Homo sapiens (Human).